The following is a 326-amino-acid chain: Cyclin-dependent kinase B2-1 (326 aa).

The Protein kinase domain maps to 28–318; that stretch reads YEKLEKVGEG…AKKAMEHPYF (291 aa). ATP contacts are provided by residues 34-42 and K57; that span reads VGEGTYGKV. A Phosphothreonine modification is found at T38. Y39 carries the phosphotyrosine modification. D159 functions as the Proton acceptor in the catalytic mechanism. T193 carries the post-translational modification Phosphothreonine.

This sequence belongs to the protein kinase superfamily. CMGC Ser/Thr protein kinase family. CDC2/CDKX subfamily. In terms of assembly, interacts with CYCB2-1 and CYCB2-2. Binding to CYCB2-1 or CYCB2-2 activates CDK kinase. Expressed in the dividing region of the root apex and the intercalary meristem of internodes.

It localises to the nucleus. The protein localises to the cytoplasm. Its subcellular location is the cytoskeleton. It is found in the spindle. The protein resides in the phragmoplast. It carries out the reaction L-seryl-[protein] + ATP = O-phospho-L-seryl-[protein] + ADP + H(+). The catalysed reaction is L-threonyl-[protein] + ATP = O-phospho-L-threonyl-[protein] + ADP + H(+). The enzyme catalyses [DNA-directed RNA polymerase] + ATP = phospho-[DNA-directed RNA polymerase] + ADP + H(+). Functionally, forms a complex with CYCB2-1 or CYCB2-2 that activates CDK kinase in tobacco BY2 cells during G2/M (mitosis) phases. May be involved in the regulation of the cell cycle at the G2/M transition. The protein is Cyclin-dependent kinase B2-1 (CDKB2-1) of Oryza sativa subsp. japonica (Rice).